Reading from the N-terminus, the 1446-residue chain is ABC-type transporter oblD (1446 aa).

N-linked (GlcNAc...) asparagine glycans are attached at residues N9, N28, N222, N281, and N305. Positions 104-357 constitute an ABC transporter 1 domain; the sequence is LEVLSLVSKA…FLDMGFVCPD (254 aa). 6 helical membrane passes run 468 to 488, 502 to 522, 548 to 568, 577 to 597, 610 to 630, and 719 to 739; these read VTIS…SIFY, ALLF…MLTL, MIMD…VLYF, GAFF…SMFF, ALPF…FTIP, and IGVI…ATDF. The 243-residue stretch at 796 to 1038 folds into the ABC transporter 2 domain; sequence FQWKDVCFDI…ILIDYFVRNG (243 aa). An ATP-binding site is contributed by 832 to 839; the sequence is GVSGAGKT. A run of 5 helical transmembrane segments spans residues 1147 to 1167, 1177 to 1197, 1217 to 1237, 1265 to 1285, and 1301 to 1321; these read ALCV…PNTI, IFML…HFVA, FIIS…VLMF, LMVW…IAAF, and LCLI…FWIF. N-linked (GlcNAc...) asparagine glycans are attached at residues N1344 and N1359. Residues 1412–1432 form a helical membrane-spanning segment; the sequence is FGLMWVFIVFNIFAACLLYWW.

The protein belongs to the ABC transporter superfamily. ABCG family. PDR (TC 3.A.1.205) subfamily.

The protein resides in the cell membrane. Functionally, ABC-type transporter; part of the gene cluster that mediates the biosynthesis of the sesterterpenes ophiobolins, fungal phytotoxins with potential anti-cancer activities. Acts as a specific transporter involved in ophiobolins secretion. The chain is ABC-type transporter oblD from Aspergillus clavatus (strain ATCC 1007 / CBS 513.65 / DSM 816 / NCTC 3887 / NRRL 1 / QM 1276 / 107).